Consider the following 303-residue polypeptide: Movement protein (303 aa).

Residues 272 to 302 (PPKRDFELTETSKLKSMISDLTQKVVNLDKK) adopt a coiled-coil conformation.

This sequence belongs to the caulimoviridae movement protein family. Homotrimer, through the coiled-coil domain. Interacts with VAP.

It localises to the host cell junction. It is found in the host plasmodesma. Transports viral genome to neighboring plant cells directly through plasmosdesmata, without any budding. The movement protein allows efficient cell to cell propagation, by bypassing the host cell wall barrier. Acts by forming tubules structures that increase the size exclusion limit (SEL) of plasmodesmata, thereby allowing viral ribonucleocapsids to spread directly to neighboring cells. The polypeptide is Movement protein (Soybean chlorotic mottle virus).